A 699-amino-acid polypeptide reads, in one-letter code: Elongation factor G (699 aa).

Residues 8–288 enclose the tr-type G domain; that stretch reads EDYRNFGIMA…AVVDYLPSPM (281 aa). GTP is bound by residues 17–24, 86–90, and 140–143; these read AHIDAGKT, DTPGH, and NKMD.

Belongs to the TRAFAC class translation factor GTPase superfamily. Classic translation factor GTPase family. EF-G/EF-2 subfamily.

The protein localises to the cytoplasm. Its function is as follows. Catalyzes the GTP-dependent ribosomal translocation step during translation elongation. During this step, the ribosome changes from the pre-translocational (PRE) to the post-translocational (POST) state as the newly formed A-site-bound peptidyl-tRNA and P-site-bound deacylated tRNA move to the P and E sites, respectively. Catalyzes the coordinated movement of the two tRNA molecules, the mRNA and conformational changes in the ribosome. This chain is Elongation factor G, found in Rhizobium leguminosarum bv. trifolii (strain WSM2304).